A 121-amino-acid chain; its full sequence is Small ribosomal subunit protein uS13 (121 aa).

The interval 94–121 is disordered; sequence GLPVRGQNTKNNARTRKGKAVAIAGKKK. Basic residues predominate over residues 106 to 121; the sequence is ARTRKGKAVAIAGKKK.

This sequence belongs to the universal ribosomal protein uS13 family. In terms of assembly, part of the 30S ribosomal subunit. Forms a loose heterodimer with protein S19. Forms two bridges to the 50S subunit in the 70S ribosome.

In terms of biological role, located at the top of the head of the 30S subunit, it contacts several helices of the 16S rRNA. In the 70S ribosome it contacts the 23S rRNA (bridge B1a) and protein L5 of the 50S subunit (bridge B1b), connecting the 2 subunits; these bridges are implicated in subunit movement. Contacts the tRNAs in the A and P-sites. This chain is Small ribosomal subunit protein uS13, found in Streptococcus sanguinis (strain SK36).